Consider the following 319-residue polypeptide: Cytochrome c biogenesis protein CcsA (319 aa).

Transmembrane regions (helical) follow at residues valine 11 to phenylalanine 31, isoleucine 34 to leucine 54, leucine 71 to serine 91, leucine 97 to leucine 117, isoleucine 142 to isoleucine 162, isoleucine 227 to asparagine 247, tryptophan 254 to leucine 274, and alanine 288 to leucine 308.

It belongs to the CcmF/CycK/Ccl1/NrfE/CcsA family. May interact with Ccs1.

The protein resides in the plastid. The protein localises to the chloroplast thylakoid membrane. In terms of biological role, required during biogenesis of c-type cytochromes (cytochrome c6 and cytochrome f) at the step of heme attachment. This is Cytochrome c biogenesis protein CcsA from Porphyra purpurea (Red seaweed).